The chain runs to 298 residues: MRGLDYRWIEALDSVVSKGSFERAAEQLFISQSAVSQRIKQLEKYLAQPVLIREQPPRPTLVGKKLLGLYRRVCLIEQELVPELTNQEHVRPVSMSIATNADSLATWLLPALDKVMKSRQVELNLVIYGESRTLDKLKNGEVVGAISLEPQPITGCSAEYLGQMEYLCVASPEFYQKYFAKGVTPRSLIKAPAVSYDQYDELHNKFLWDYFAVLRDKVINHTVGSSEAFVRLALSGAAYCLIPRLQIISELESGALINMTPDFMLSYPIFWHHWQLETGVLLEISDAITAYAKSVLPQ.

In terms of domain architecture, HTH lysR-type spans 4-60 (LDYRWIEALDSVVSKGSFERAAEQLFISQSAVSQRIKQLEKYLAQPVLIREQPPRPT). The H-T-H motif DNA-binding region spans 21-40 (FERAAEQLFISQSAVSQRIK).

The protein belongs to the LysR transcriptional regulatory family. Homodimer.

Controls the transcription of genes involved in arginine and lysine metabolism. This Vibrio cholerae serotype O1 (strain ATCC 39541 / Classical Ogawa 395 / O395) protein is HTH-type transcriptional regulator ArgP.